A 373-amino-acid polypeptide reads, in one-letter code: Alanine racemase (373 aa).

Lys-37 (proton acceptor; specific for D-alanine) is an active-site residue. The residue at position 37 (Lys-37) is an N6-(pyridoxal phosphate)lysine. Arg-135 contacts substrate. Tyr-266 acts as the Proton acceptor; specific for L-alanine in catalysis. Met-313 contributes to the substrate binding site.

The protein belongs to the alanine racemase family. Requires pyridoxal 5'-phosphate as cofactor.

The enzyme catalyses L-alanine = D-alanine. It participates in amino-acid biosynthesis; D-alanine biosynthesis; D-alanine from L-alanine: step 1/1. Functionally, catalyzes the interconversion of L-alanine and D-alanine. This organism is able to use both L- and D-alanine as a nitrogen source. May also prevent D-alanine from interfering with the use of L-alanine. This chain is Alanine racemase (alr), found in Methanococcus maripaludis (strain DSM 14266 / JCM 13030 / NBRC 101832 / S2 / LL).